The chain runs to 177 residues: Nucleoside triphosphate/diphosphate phosphatase (177 aa).

The active-site Proton donor is Arg-23. Residues Asn-87, Asp-103, Asp-105, Asp-107, Asp-120, and Glu-123 each contribute to the Mg(2+) site.

It belongs to the Ntdp family. Mg(2+) is required as a cofactor.

The enzyme catalyses a ribonucleoside 5'-triphosphate + H2O = a ribonucleoside 5'-diphosphate + phosphate + H(+). It catalyses the reaction a ribonucleoside 5'-diphosphate + H2O = a ribonucleoside 5'-phosphate + phosphate + H(+). Functionally, has nucleoside phosphatase activity towards nucleoside triphosphates and nucleoside diphosphates. In Streptococcus equi subsp. zooepidemicus (strain MGCS10565), this protein is Nucleoside triphosphate/diphosphate phosphatase.